The sequence spans 311 residues: Taste receptor type 2 member 9 (311 aa).

Residues 1–9 (MPSTIEAIY) lie on the Extracellular side of the membrane. A helical transmembrane segment spans residues 10–32 (IILIAGELTIGIWGNGFIVLVNC). Topologically, residues 33–52 (IDWLKRRDVSLIDIILISLA) are cytoplasmic. A helical membrane pass occupies residues 53–72 (ISRICLLCVISLDGFFILLF). At 73-86 (PGTYDINVLESIMD) the chain is on the extracellular side. The helical transmembrane segment at 87–109 (AVWTFANNSSLWFTSCLSIFYLL) threads the bilayer. Residues 110–128 (KIANISHPFFFWLKLKINK) are Cytoplasmic-facing. A helical transmembrane segment spans residues 129-146 (VILAILLGSFLISLIISF). Topologically, residues 147-179 (PINGXWYHLFKVSHEENITWAFKVSTIPGAFKQ) are extracellular. Residue N163 is glycosylated (N-linked (GlcNAc...) asparagine). The helical transmembrane segment at 180 to 202 (LTLNLGAMVPFMLCLISFFLLLF) threads the bilayer. Residues 203 to 233 (SLVRHTKQIQLHATGLRDPSTEAHMRAIKAV) are Cytoplasmic-facing. Residues 234–256 (IIFLLLLIVYYPVFLVMTSSTLI) traverse the membrane as a helical segment. At 257–260 (PQGK) the chain is on the extracellular side. Residues 261 to 283 (LVLMIGDIVTVIFPSSHSFILIM) form a helical membrane-spanning segment. The Cytoplasmic portion of the chain corresponds to 284 to 311 (GNSKLREAFLKMLRFVKGFLRRRKPFGP).

This sequence belongs to the G-protein coupled receptor T2R family.

The protein localises to the membrane. Its function is as follows. Gustducin-coupled receptor implicated in the perception of bitter compounds in the oral cavity and the gastrointestinal tract. Signals through PLCB2 and the calcium-regulated cation channel TRPM5. This Papio hamadryas (Hamadryas baboon) protein is Taste receptor type 2 member 9 (TAS2R9).